The sequence spans 494 residues: Voltage-gated potassium channel regulatory subunit KCNF1 (494 aa).

The Cytoplasmic segment spans residues 1–183 (MDGSGERSLP…KPESSCPARV (183 aa)). A helical membrane pass occupies residues 184–204 (VAVLSFLLILVSSVVMCMGTI). Residues 224–244 (NVETACIGWFTLEYLLRLFSS) form a helical membrane-spanning segment. The Cytoplasmic segment spans residues 245 to 249 (PNKLH). Residues 250-270 (FALSFMNIVDVLAILPFYVSL) traverse the membrane as a helical segment. A helical; Voltage-sensor transmembrane segment spans residues 290–310 (QALRIMRIARIFKLARHSSGL). Topologically, residues 311–324 (QTLTYALKRSFKEL) are cytoplasmic. Residues 325-345 (GLLLMYLAVGIFVFSALGYTM) traverse the membrane as a helical segment. Positions 358–378 (PQSFWWAIITMTTVGYGDIYP) form an intramembrane region, pore-forming. The short motif at 370 to 375 (TVGYGD) is the Selectivity filter element. The helical transmembrane segment at 386–406 (NAAISFLCGVIAIALPIHPII) threads the bilayer. Topologically, residues 407–494 (NNFVRYYNKQ…HHRTRLQSCK (88 aa)) are cytoplasmic. Residues 433–469 (NSSSGGEGKTGGSRSDLDNLPPEPAGKEAPSCSSRLK) are disordered.

The protein belongs to the potassium channel family. F (TC 1.A.1.2) subfamily. Kv5.1/KCNF1 sub-subfamily. As to quaternary structure, heterotetramer with KCNB1 or KCNB2. Detected in heart, brain, liver, skeletal muscle, kidney and pancreas.

It is found in the cell membrane. In terms of biological role, regulatory alpha-subunit of the voltage-gated potassium (Kv) channel which, when coassembled with KCNB1 or KCNB2, can modulate their expression and their gating kinetics by acting on deactivation upon repolarization and inactivation during maintained depolarization. Accelerates inactivation but has relatively little effect on deactivation. Coexpression with KCNB1 or KCNB2 markedly slows inactivation. Each modulatory subunit has its own specific properties of regulation, and can lead to extensive inhibitions, to large changes in kinetics, and/or to large shifts in the voltage dependencies of the inactivation process. The gating kinetics depends on the nature and stoichiometry of the associated regulatory sunbunit. Fails to produce a potassium current when expressed alone. The sequence is that of Voltage-gated potassium channel regulatory subunit KCNF1 from Homo sapiens (Human).